We begin with the raw amino-acid sequence, 418 residues long: Arginine deiminase (418 aa).

Cysteine 406 acts as the Amidino-cysteine intermediate in catalysis.

The protein belongs to the arginine deiminase family.

The protein resides in the cytoplasm. The catalysed reaction is L-arginine + H2O = L-citrulline + NH4(+). It functions in the pathway amino-acid degradation; L-arginine degradation via ADI pathway; carbamoyl phosphate from L-arginine: step 1/2. In Lentilactobacillus hilgardii (Lactobacillus hilgardii), this protein is Arginine deiminase.